The primary structure comprises 211 residues: Large ribosomal subunit protein eL13 (211 aa).

Belongs to the eukaryotic ribosomal protein eL13 family. Component of the 60S large ribosomal subunit (LSU).

It localises to the cytoplasm. Functionally, component of the ribosome, a large ribonucleoprotein complex responsible for the synthesis of proteins in the cell. The small ribosomal subunit (SSU) binds messenger RNAs (mRNAs) and translates the encoded message by selecting cognate aminoacyl-transfer RNA (tRNA) molecules. The large subunit (LSU) contains the ribosomal catalytic site termed the peptidyl transferase center (PTC), which catalyzes the formation of peptide bonds, thereby polymerizing the amino acids delivered by tRNAs into a polypeptide chain. The nascent polypeptides leave the ribosome through a tunnel in the LSU and interact with protein factors that function in enzymatic processing, targeting, and the membrane insertion of nascent chains at the exit of the ribosomal tunnel. As part of the LSU, it is probably required for its formation and the maturation of rRNAs. The protein is Large ribosomal subunit protein eL13 (rpl13) of Ictalurus punctatus (Channel catfish).